The sequence spans 245 residues: MLKSASPMAFYDIGEQQYSTFGYILSKPGNAGAYEIDPSIPNIDDAIYGSDEFRMYAYKIKRCPRTRSHDWTECPYAHRGEKATRRDPRRYTYCAVACPAFRNGACHRGDSCEFAHGVFEYWLHPARYRTRACNAGNLCQRKVCFFAHAPEQLRQSEGKHRCRYAYRPVRARGGGNGDGVTMRMDDEGYDTSRSPVRSGKDDLDSNEEKVLLKCWSRMSIVDDHYEPSDLDLDLSHFDWISELVD.

The C3H1-type zinc finger occupies 92–119; the sequence is TYCAVACPAFRNGACHRGDSCEFAHGVF. The segment at 175–204 is disordered; sequence GNGDGVTMRMDDEGYDTSRSPVRSGKDDLD.

In terms of assembly, interacts with MARD1/FLZ9 and RD21A. Specifically expressed in embryo (at protein level).

The protein resides in the nucleus. Embryo-specific transcription factor required at the globular to heart stage transition in embryo development. This Arabidopsis thaliana (Mouse-ear cress) protein is Zinc finger CCCH domain-containing protein 54.